A 178-amino-acid polypeptide reads, in one-letter code: ATP synthase subunit b, chloroplastic (178 aa).

Residues L34 to S50 traverse the membrane as a helical segment.

Belongs to the ATPase B chain family. F-type ATPases have 2 components, F(1) - the catalytic core - and F(0) - the membrane proton channel. F(1) has five subunits: alpha(3), beta(3), gamma(1), delta(1), epsilon(1). F(0) has four main subunits: a(1), b(1), b'(1) and c(10-14). The alpha and beta chains form an alternating ring which encloses part of the gamma chain. F(1) is attached to F(0) by a central stalk formed by the gamma and epsilon chains, while a peripheral stalk is formed by the delta, b and b' chains.

Its subcellular location is the plastid. It is found in the chloroplast thylakoid membrane. F(1)F(0) ATP synthase produces ATP from ADP in the presence of a proton or sodium gradient. F-type ATPases consist of two structural domains, F(1) containing the extramembraneous catalytic core and F(0) containing the membrane proton channel, linked together by a central stalk and a peripheral stalk. During catalysis, ATP synthesis in the catalytic domain of F(1) is coupled via a rotary mechanism of the central stalk subunits to proton translocation. In terms of biological role, component of the F(0) channel, it forms part of the peripheral stalk, linking F(1) to F(0). The protein is ATP synthase subunit b, chloroplastic of Ochrosphaera neapolitana.